The primary structure comprises 377 residues: Molybdenum import ATP-binding protein ModC (377 aa).

Residues 17 to 254 enclose the ABC transporter domain; sequence ITGDEAIRAR…LDLPFAHDED (238 aa). An ATP-binding site is contributed by 52–59; that stretch reads GHSGSGKT. One can recognise a Mop domain in the interval 313-377; it reads DSSILNVLPA…AQVKGVALLR (65 aa).

Belongs to the ABC transporter superfamily. Molybdate importer (TC 3.A.1.8) family. In terms of assembly, the complex is composed of two ATP-binding proteins (ModC), two transmembrane proteins (ModB) and a solute-binding protein (ModA).

The protein localises to the cell inner membrane. It carries out the reaction molybdate(out) + ATP + H2O = molybdate(in) + ADP + phosphate + H(+). In terms of biological role, part of the ABC transporter complex ModABC involved in molybdenum import. Responsible for energy coupling to the transport system. The polypeptide is Molybdenum import ATP-binding protein ModC (Aromatoleum aromaticum (strain DSM 19018 / LMG 30748 / EbN1) (Azoarcus sp. (strain EbN1))).